Consider the following 196-residue polypeptide: Chorion protein S19 (196 aa).

A signal peptide spans 1–16 (MNTFATLAIFISACLA).

It belongs to the chorion protein S19 family.

Its subcellular location is the secreted. In terms of biological role, chorion membrane (egg shell) protein; plays a role in protecting the egg from the environment. This chain is Chorion protein S19 (Cp19), found in Drosophila grimshawi (Hawaiian fruit fly).